The chain runs to 153 residues: UPF0251 protein CT0950 (153 aa).

This sequence belongs to the UPF0251 family.

In Chlorobaculum tepidum (strain ATCC 49652 / DSM 12025 / NBRC 103806 / TLS) (Chlorobium tepidum), this protein is UPF0251 protein CT0950.